The primary structure comprises 157 residues: Large ribosomal subunit protein uL15 (157 aa).

The tract at residues 1 to 64 (MKLNEIPAVP…MPLQRRLPKR (64 aa)) is disordered. A compositionally biased stretch (gly residues) spans 21–31 (RGPGSGNGKTA).

Belongs to the universal ribosomal protein uL15 family. In terms of assembly, part of the 50S ribosomal subunit.

Functionally, binds to the 23S rRNA. The protein is Large ribosomal subunit protein uL15 of Magnetococcus marinus (strain ATCC BAA-1437 / JCM 17883 / MC-1).